The sequence spans 246 residues: Octanoyltransferase (246 aa).

A BPL/LPL catalytic domain is found at 38 to 213 (AQQSDEFWVL…FLAKRLGLTP (176 aa)). Residues 77 to 84 (RGGQVTYH), 144 to 146 (SLG), and 157 to 159 (GLA) each bind substrate. Cysteine 175 functions as the Acyl-thioester intermediate in the catalytic mechanism. A disordered region spans residues 225 to 246 (RQENVTTGGDPGSALTQQPERL).

Belongs to the LipB family.

The protein resides in the cytoplasm. It catalyses the reaction octanoyl-[ACP] + L-lysyl-[protein] = N(6)-octanoyl-L-lysyl-[protein] + holo-[ACP] + H(+). The protein operates within protein modification; protein lipoylation via endogenous pathway; protein N(6)-(lipoyl)lysine from octanoyl-[acyl-carrier-protein]: step 1/2. In terms of biological role, catalyzes the transfer of endogenously produced octanoic acid from octanoyl-acyl-carrier-protein onto the lipoyl domains of lipoate-dependent enzymes. Lipoyl-ACP can also act as a substrate although octanoyl-ACP is likely to be the physiological substrate. The polypeptide is Octanoyltransferase (Alcanivorax borkumensis (strain ATCC 700651 / DSM 11573 / NCIMB 13689 / SK2)).